We begin with the raw amino-acid sequence, 137 residues long: Putative pre-16S rRNA nuclease (137 aa).

The protein belongs to the YqgF nuclease family.

Its subcellular location is the cytoplasm. Functionally, could be a nuclease involved in processing of the 5'-end of pre-16S rRNA. The polypeptide is Putative pre-16S rRNA nuclease (Buchnera aphidicola subsp. Schizaphis graminum (strain Sg)).